The following is a 1072-amino-acid chain: Integrator complex subunit 3 homolog (1072 aa).

2 disordered regions span residues 920–941 (YPSS…STSI) and 1002–1072 (DTTV…NDSD). Phosphoserine is present on residues serine 1042, serine 1043, serine 1047, and serine 1048.

The protein belongs to the Integrator subunit 3 family. Belongs to the multiprotein complex Integrator, at least composed of IntS1, IntS2, IntS3, IntS4, omd/IntS5, IntS6, defl/IntS7, IntS8, IntS9, IntS10, IntS11, IntS12, asun/IntS13, IntS14 and IntS15. The core complex associates with protein phosphatase 2A subunits mts/PP2A and Pp2A-29B, to form the Integrator-PP2A (INTAC) complex.

The protein localises to the nucleus. It is found in the cytoplasm. Its function is as follows. Component of the integrator complex, a multiprotein complex that terminates RNA polymerase II (Pol II) transcription in the promoter-proximal region of genes. The integrator complex provides a quality checkpoint during transcription elongation by driving premature transcription termination of transcripts that are unfavorably configured for transcriptional elongation: the complex terminates transcription by (1) catalyzing dephosphorylation of the C-terminal domain (CTD) of Pol II subunit Polr2A/Rbp1 and Spt5, and (2) degrading the exiting nascent RNA transcript via endonuclease activity. The integrator complex is also involved in the 3'-end processing of the U7 snRNA, and also the spliceosomal snRNAs U1, U2, U4 and U5. This Drosophila erecta (Fruit fly) protein is Integrator complex subunit 3 homolog (IntS3).